Reading from the N-terminus, the 341-residue chain is Eukaryotic translation initiation factor 3 subunit I (341 aa).

WD repeat units lie at residues 8 to 47 (GHERSLNQIVFNSEGDLLFSASKDSVVNAWYTSNGERLGT), 56 to 95 (GHNGSVWTVAVDSQTRFLLTGGADNAMKLWEVKTGECLYT), 151 to 190 (LSGSRATVAIWAPLSDYIITGHESGKIAKYDVKTGEEVQA), 194 to 233 (EHSALISDIQLSPDGTYFITASKDKTARLWDIETLEVMKV), 235 to 274 (TTETPVNSAVITPDRPYIILGGGQDAMNVTTTSQRAGKFE), and 291 to 331 (GHFG…RSRP).

The protein belongs to the eIF-3 subunit I family. As to quaternary structure, component of the eukaryotic translation initiation factor 3 (eIF-3) complex.

It is found in the cytoplasm. Component of the eukaryotic translation initiation factor 3 (eIF-3) complex, which is involved in protein synthesis of a specialized repertoire of mRNAs and, together with other initiation factors, stimulates binding of mRNA and methionyl-tRNAi to the 40S ribosome. The eIF-3 complex specifically targets and initiates translation of a subset of mRNAs involved in cell proliferation. This chain is Eukaryotic translation initiation factor 3 subunit I, found in Cryptococcus neoformans var. neoformans serotype D (strain B-3501A) (Filobasidiella neoformans).